The sequence spans 196 residues: uncharacterized protein (196 aa).

It belongs to the NAD(P)H dehydrogenase (quinone) family.

This is an uncharacterized protein from Escherichia coli (strain K12).